We begin with the raw amino-acid sequence, 285 residues long: uncharacterized protein (285 aa).

Residues 92–199 (TLLLADVEES…PTINRTARLR (108 aa)) form the Guanylate cyclase domain.

The protein belongs to the adenylyl cyclase class-4/guanylyl cyclase family.

This is an uncharacterized protein from Mycobacterium tuberculosis (strain CDC 1551 / Oshkosh).